A 427-amino-acid chain; its full sequence is MSRSETLFNNAQKHIPGGVNSPVRAFKSVGGTPLFFKHAEGAYVLDEDDKRYVDYVGSWGPMILGHSHPDVLDAVRRQLDHGLSYGAPTALEVEMADLVCSMVPSMEMVRMVSSGTEATMSAIRLARGYTGRDSIIKFEGCYHGHSDSLLVKAGSGALTFGVPNSPGVPAAFAKHTLTLPFNDIEAVRKTLGEVGKEVACIIVEPVAGNMNCVPPAPGFLEGLREACDEHGVVLIFDEVMTGFRVALGGAQAYYGVTPDLSTFGKIIGGGMPVGAFGGKREIMQQISPLGPVYQAGTLSGNPLAMAAGLTTLRLISRPGFHNELTAYTTRMLDGLQQRADAAGIPFVTTQAGGMFGLYFSGADAIVTFEDVMASDVERFKRFFHLMLDGGVYLAPSAFEAGFTSIAHGDKELEITLNAAEKAFAALK.

An N6-(pyridoxal phosphate)lysine modification is found at Lys265.

The protein belongs to the class-III pyridoxal-phosphate-dependent aminotransferase family. HemL subfamily. As to quaternary structure, homodimer. Pyridoxal 5'-phosphate is required as a cofactor.

It localises to the cytoplasm. The enzyme catalyses (S)-4-amino-5-oxopentanoate = 5-aminolevulinate. It functions in the pathway porphyrin-containing compound metabolism; protoporphyrin-IX biosynthesis; 5-aminolevulinate from L-glutamyl-tRNA(Glu): step 2/2. The sequence is that of Glutamate-1-semialdehyde 2,1-aminomutase from Pseudomonas aeruginosa (strain UCBPP-PA14).